The following is a 511-amino-acid chain: RNA-splicing ligase RtcB homolog (511 aa).

Residues D125, C128, H233, H265, and H359 each coordinate Mn(2+). N232–E236 contacts GMP. GMP is bound by residues H359–N360, G408–M411, S415, H434–G437, and K510. H434 functions as the GMP-histidine intermediate in the catalytic mechanism.

It belongs to the RtcB family. In terms of assembly, catalytic component of the tRNA-splicing ligase complex. Requires Mn(2+) as cofactor.

It catalyses the reaction a 3'-end 3'-phospho-ribonucleotide-RNA + a 5'-end dephospho-ribonucleoside-RNA + GTP = a ribonucleotidyl-ribonucleotide-RNA + GMP + diphosphate. The enzyme catalyses a 3'-end 2',3'-cyclophospho-ribonucleotide-RNA + a 5'-end dephospho-ribonucleoside-RNA + GTP + H2O = a ribonucleotidyl-ribonucleotide-RNA + GMP + diphosphate + H(+). Catalytic subunit of the tRNA-splicing ligase complex that acts by directly joining spliced tRNA halves to mature-sized tRNAs by incorporating the precursor-derived splice junction phosphate into the mature tRNA as a canonical 3',5'-phosphodiester. May act as an RNA ligase with broad substrate specificity, and may function toward other RNAs. The polypeptide is RNA-splicing ligase RtcB homolog (Plasmodium knowlesi (strain H)).